A 441-amino-acid chain; its full sequence is UPF0761 membrane protein RSc1559 (441 aa).

Helical transmembrane passes span 44 to 64 (VLSL…FPMF), 101 to 121 (GLTA…MLTV), 141 to 161 (VLVF…SLSV), 182 to 202 (VVVG…LYVF), 207 to 227 (LVAW…FEIA), and 248 to 268 (FAAL…TLLG).

Belongs to the UPF0761 family.

It is found in the cell inner membrane. The sequence is that of UPF0761 membrane protein RSc1559 from Ralstonia nicotianae (strain ATCC BAA-1114 / GMI1000) (Ralstonia solanacearum).